The chain runs to 263 residues: 3-methyl-2-oxobutanoate hydroxymethyltransferase (263 aa).

Mg(2+)-binding residues include aspartate 45 and aspartate 84. 3-methyl-2-oxobutanoate is bound by residues 45 to 46, aspartate 84, and lysine 112; that span reads DS. Glutamate 114 contacts Mg(2+). The active-site Proton acceptor is the glutamate 180.

The protein belongs to the PanB family. In terms of assembly, homodecamer; pentamer of dimers. Requires Mg(2+) as cofactor.

The protein resides in the cytoplasm. It catalyses the reaction 3-methyl-2-oxobutanoate + (6R)-5,10-methylene-5,6,7,8-tetrahydrofolate + H2O = 2-dehydropantoate + (6S)-5,6,7,8-tetrahydrofolate. It functions in the pathway cofactor biosynthesis; (R)-pantothenate biosynthesis; (R)-pantoate from 3-methyl-2-oxobutanoate: step 1/2. Its function is as follows. Catalyzes the reversible reaction in which hydroxymethyl group from 5,10-methylenetetrahydrofolate is transferred onto alpha-ketoisovalerate to form ketopantoate. The polypeptide is 3-methyl-2-oxobutanoate hydroxymethyltransferase (Salmonella agona (strain SL483)).